The chain runs to 501 residues: Lysine--tRNA ligase (501 aa).

The Mg(2+) site is built by glutamate 402 and glutamate 409.

This sequence belongs to the class-II aminoacyl-tRNA synthetase family. Homodimer. It depends on Mg(2+) as a cofactor.

It is found in the cytoplasm. The enzyme catalyses tRNA(Lys) + L-lysine + ATP = L-lysyl-tRNA(Lys) + AMP + diphosphate. This is Lysine--tRNA ligase (lysS) from Helicobacter pylori (strain J99 / ATCC 700824) (Campylobacter pylori J99).